A 625-amino-acid chain; its full sequence is Phosphomethylpyrimidine synthase (625 aa).

Substrate contacts are provided by residues N237, M266, Y295, H331, 351 to 353, 392 to 395, and E431; these read SRG and DGLR. H435 serves as a coordination point for Zn(2+). Y458 provides a ligand contact to substrate. H499 contributes to the Zn(2+) binding site. [4Fe-4S] cluster-binding residues include C579, C582, and C587.

Belongs to the ThiC family. Homodimer. The cofactor is [4Fe-4S] cluster.

The catalysed reaction is 5-amino-1-(5-phospho-beta-D-ribosyl)imidazole + S-adenosyl-L-methionine = 4-amino-2-methyl-5-(phosphooxymethyl)pyrimidine + CO + 5'-deoxyadenosine + formate + L-methionine + 3 H(+). Its pathway is cofactor biosynthesis; thiamine diphosphate biosynthesis. Functionally, catalyzes the synthesis of the hydroxymethylpyrimidine phosphate (HMP-P) moiety of thiamine from aminoimidazole ribotide (AIR) in a radical S-adenosyl-L-methionine (SAM)-dependent reaction. The sequence is that of Phosphomethylpyrimidine synthase from Cupriavidus metallidurans (strain ATCC 43123 / DSM 2839 / NBRC 102507 / CH34) (Ralstonia metallidurans).